The sequence spans 92 residues: Small ribosomal subunit protein uS19 (92 aa).

It belongs to the universal ribosomal protein uS19 family.

Protein S19 forms a complex with S13 that binds strongly to the 16S ribosomal RNA. This Bacillus licheniformis (strain ATCC 14580 / DSM 13 / JCM 2505 / CCUG 7422 / NBRC 12200 / NCIMB 9375 / NCTC 10341 / NRRL NRS-1264 / Gibson 46) protein is Small ribosomal subunit protein uS19.